Reading from the N-terminus, the 445-residue chain is Xylose isomerase (445 aa).

Residues His-107 and Asp-110 contribute to the active site. Mg(2+)-binding residues include Glu-238, Glu-274, His-277, Asp-302, Asp-313, Asp-315, and Asp-345.

It belongs to the xylose isomerase family. Homotetramer. It depends on Mg(2+) as a cofactor.

It localises to the cytoplasm. It carries out the reaction alpha-D-xylose = alpha-D-xylulofuranose. This is Xylose isomerase (xylA) from Bacillus subtilis (strain 168).